The chain runs to 1270 residues: DNA-directed RNA polymerase subunit beta (1270 aa).

This sequence belongs to the RNA polymerase beta chain family. The RNAP catalytic core consists of 2 alpha, 1 beta, 1 beta' and 1 omega subunit. When a sigma factor is associated with the core the holoenzyme is formed, which can initiate transcription.

The catalysed reaction is RNA(n) + a ribonucleoside 5'-triphosphate = RNA(n+1) + diphosphate. Functionally, DNA-dependent RNA polymerase catalyzes the transcription of DNA into RNA using the four ribonucleoside triphosphates as substrates. The polypeptide is DNA-directed RNA polymerase subunit beta (Phocaeicola vulgatus (strain ATCC 8482 / DSM 1447 / JCM 5826 / CCUG 4940 / NBRC 14291 / NCTC 11154) (Bacteroides vulgatus)).